A 490-amino-acid chain; its full sequence is Metal cation symporter ZIP14 (490 aa).

Residues 1–28 (MKLLHPAFQSCLLLTLLGLWRTTPEAHA) form the signal peptide. Residues 29-155 (SSPGAPAISA…PSAVEVWGYG (127 aa)) lie on the Extracellular side of the membrane. N-linked (GlcNAc...) asparagine glycans are attached at residues Asn75, Asn85, and Asn100. A helical membrane pass occupies residues 156–176 (LLCVTVISLCSLLGASVVPFM). The Cytoplasmic segment spans residues 177 to 184 (KKTFYKRL). The chain crosses the membrane as a helical span at residues 185-205 (LLYFIALAIGTLYSNALFQLI). The Extracellular segment spans residues 206–222 (PEAFGFNPLEDYYVSKS). A helical transmembrane segment spans residues 223–243 (AVVFGGFYLFFFTEKILKILL). Residues 244 to 395 (KQKNEHHHGH…LLNAGMSIQQ (152 aa)) are Cytoplasmic-facing. The HHHGHXHX-motif signature appears at 249-256 (HHHGHSHY). Positions 374–379 (EEFPHE) match the XEXPHE-motif motif. The helical transmembrane segment at 396–416 (ALFFNFLSACCCYLGLAFGIL) threads the bilayer. Residues 417–422 (AGSHFS) are Extracellular-facing. Residues 423–443 (ANWIFALAGGMFLYISLADMF) traverse the membrane as a helical segment. The Cytoplasmic segment spans residues 444-458 (PEMNEVCQEDERKGS). The chain crosses the membrane as a helical span at residues 459-479 (ILIPFVIQNLGLLTGFTIMVV). Over 480 to 490 (LTMYSGQIQIG) the chain is Extracellular.

The protein belongs to the ZIP transporter (TC 2.A.5) family. In terms of assembly, homotrimer. Post-translationally, ubiquitinated. Ubiquitination occurs upon iron depletion. The ubiquitinated form undergoes proteasomal degradation. In terms of processing, N-glycosylated. N-glycosylation at Asn-100 is required for iron-regulated extraction of the transporter from membranes and subsequent proteasomal degradation.

It localises to the cell membrane. The protein localises to the apical cell membrane. The protein resides in the basolateral cell membrane. Its subcellular location is the early endosome membrane. It is found in the late endosome membrane. It localises to the lysosome membrane. It catalyses the reaction Zn(2+)(out) + 2 hydrogencarbonate(out) = Zn(2+)(in) + 2 hydrogencarbonate(in). It carries out the reaction Mn(2+)(out) + 2 hydrogencarbonate(out) = Mn(2+)(in) + 2 hydrogencarbonate(in). The enzyme catalyses Fe(2+)(out) + 2 hydrogencarbonate(out) = Fe(2+)(in) + 2 hydrogencarbonate(in). The catalysed reaction is Cd(2+)(out) + 2 hydrogencarbonate(out) = Cd(2+)(in) + 2 hydrogencarbonate(in). Its function is as follows. Electroneutral transporter of the plasma membrane mediating the cellular uptake of the divalent metal cations zinc, manganese and iron that are important for tissue homeostasis, metabolism, development and immunity. Functions as an energy-dependent symporter, transporting through the membranes an electroneutral complex composed of a divalent metal cation and two bicarbonate anions. Beside these endogenous cellular substrates, can also import cadmium a non-essential metal which is cytotoxic and carcinogenic. Controls the cellular uptake by the intestinal epithelium of systemic zinc, which is in turn required to maintain tight junctions and the intestinal permeability. Modifies the activity of zinc-dependent phosphodiesterases, thereby indirectly regulating G protein-coupled receptor signaling pathways important for gluconeogenesis and chondrocyte differentiation. Regulates insulin receptor signaling, glucose uptake, glycogen synthesis and gluconeogenesis in hepatocytes through the zinc-dependent intracellular catabolism of insulin. Through zinc cellular uptake also plays a role in the adaptation of cells to endoplasmic reticulum stress. Major manganese transporter of the basolateral membrane of intestinal epithelial cells, it plays a central role in manganese systemic homeostasis through intestinal manganese uptake. Also involved in manganese extracellular uptake by cells of the blood-brain barrier. May also play a role in manganese and zinc homeostasis participating in their elimination from the blood through the hepatobiliary excretion. Also functions in the extracellular uptake of free iron. May also function intracellularly and mediate the transport from endosomes to cytosol of iron endocytosed by transferrin. Plays a role in innate immunity by regulating the expression of cytokines by activated macrophages. This Pongo abelii (Sumatran orangutan) protein is Metal cation symporter ZIP14.